The primary structure comprises 70 residues: MRVLFFVFGVLSLMSTVPPTRSFTSNDECPSEYYHCRLKCNADEHAIRYCADFSICCKLKIIQIDGQKKW.

A signal peptide spans 1–22 (MRVLFFVFGVLSLMSTVPPTRS). 3 disulfide bridges follow: Cys29/Cys56, Cys36/Cys50, and Cys40/Cys57.

Belongs to the beta-defensin family.

Its subcellular location is the secreted. Has antibacterial activity. The protein is Beta-defensin 131B of Homo sapiens (Human).